A 429-amino-acid chain; its full sequence is 46 kDa membrane protein (429 aa).

9 helical membrane-spanning segments follow: residues 26–46 (AALTGAAIVVTLPIINSEDVF), 51–71 (TGIDWEVIFLLLSMMIIVSVL), 99–119 (LVLVMALGSALLDNVTTVLLI), 173–193 (FLIHLTPIVIIVTVVLSALLP), 224–244 (LLIKCGVVLLLVFVAFIAHPV), 279–299 (TLLFFAGLFIMVGALVKTDVV), 315–335 (LLTVVLTLGVSTLVSSIIDNI), 360–380 (ILWWALALGADFGGNLTAVGA), and 407–427 (IAVTVISIALAGIYLWLRYLV).

The protein belongs to the CitM (TC 2.A.11) transporter family.

The protein localises to the cell membrane. This is 46 kDa membrane protein (ag45) from Mycobacterium leprae (strain TN).